The following is a 487-amino-acid chain: Cytochrome P450 monooxygenase pyvB (487 aa).

The chain crosses the membrane as a helical span at residues 17 to 37; that stretch reads PAYSSVVIGALVVCLVCLVWP. A heme-binding site is contributed by cysteine 426.

The protein belongs to the cytochrome P450 family. The cofactor is heme.

It is found in the membrane. It participates in secondary metabolite biosynthesis. Its function is as follows. Cytochrome P450 monooxygenase; part of the gene cluster that mediates the biosynthesis of pyranoviolin A, a pyranonigrin analog with a C-3 methoxy group. Initially, the PKS portion of pyvA synthesizes C-10 carbon chain from 5 molecules of malonyl-CoA, which is then condensed with the thiolation (T) domain-bound glycine activated by the adenylation (A) domain. The subsequent chain release by Dieckmann condensation (DKC) could be catalyzed by the TE domain present at the C-terminus of pyvA and/or the alpha/beta hydrolase pyvD, installing the tetramic acid moiety. The FAD-dependent monooxygenase pyvC next epoxidizes one of the olefins of the polyketide part, and the epoxide ring-opening induces the dihydro-gamma-pyrone ring formation. The cytochrome P450 monooxygeanse pyvB would be responsible for the 2 consecutive reactions, in which the dihydro-gamma-pyrone is oxidized to gamma-pyrone and C-7 is hydroxylated to yield pyranonigrin F. Finally, the O-methyltransferase pyvH methylates the C-3 hydroxy group to complete the biosynthesis. The chain is Cytochrome P450 monooxygenase pyvB from Aspergillus violaceofuscus (strain CBS 115571).